We begin with the raw amino-acid sequence, 259 residues long: Peroxisomal membrane protein 11B (259 aa).

At lysine 43 the chain carries N6-acetyllysine. Residues 157–176 form a disordered region; that stretch reads LKGSGGGVPGGSETGGLGGP. The span at 159–176 shows a compositional bias: gly residues; that stretch reads GSGGGVPGGSETGGLGGP. The tract at residues 211 to 259 is interaction with PEX19, PEX11G and FIS1 and peroxisome targeting; it reads VVRNACDLFIPLDKLGLWRCGPGIVGLCGLVSSILSILTLIYPWLRLKP. A helical membrane pass occupies residues 233–255; the sequence is GIVGLCGLVSSILSILTLIYPWL.

The protein belongs to the peroxin-11 family. Homodimer. Heterodimer with PEX11G. Interacts with PEX19. Interacts with FIS1.

The protein localises to the peroxisome membrane. In terms of biological role, involved in peroxisomal proliferation. May regulate peroxisome division by recruiting the dynamin-related GTPase DNM1L to the peroxisomal membrane. Promotes membrane protrusion and elongation on the peroxisomal surface. The polypeptide is Peroxisomal membrane protein 11B (PEX11B) (Homo sapiens (Human)).